A 307-amino-acid polypeptide reads, in one-letter code: 2-dehydropantoate 2-reductase (307 aa).

Residues 7–12 (GSGAMG), N102, and A128 each bind NADP(+). N102 serves as a coordination point for substrate. The Proton donor role is filled by K184. The substrate site is built by N188, N192, and S255. E268 is a binding site for NADP(+).

The protein belongs to the ketopantoate reductase family.

It localises to the cytoplasm. The enzyme catalyses (R)-pantoate + NADP(+) = 2-dehydropantoate + NADPH + H(+). It functions in the pathway cofactor biosynthesis; (R)-pantothenate biosynthesis; (R)-pantoate from 3-methyl-2-oxobutanoate: step 2/2. Its function is as follows. Catalyzes the NADPH-dependent reduction of ketopantoate into pantoic acid. This Streptococcus pyogenes serotype M6 (strain ATCC BAA-946 / MGAS10394) protein is 2-dehydropantoate 2-reductase (apbA).